A 1090-amino-acid polypeptide reads, in one-letter code: Exoglucanase B (1090 aa).

An N-terminal signal peptide occupies residues 1 to 33 (MSSTTRRRSAWVAAATVGVSSFLAVAGITPAIA). A propeptide spanning residues 34–53 (AAGAGQPATVTVPAASPVRA) is cleaved from the precursor. Residues 54–699 (AVDGEYAQRF…RLFDDGTTTP (646 aa)) are catalytic. The Nucleophile role is filled by aspartate 513. Fibronectin type-III domains lie at 706–791 (VPTG…TKAT), 797–887 (APSV…TKSD), and 897–984 (VPAG…TKTP). The region spanning 983 to 1090 (TPQTGGSCSV…SFTLNGASCT (108 aa)) is the CBM2 domain. Cysteine 990 and cysteine 1089 are disulfide-bonded. The tract at residues 1069-1090 (NGSHTGQNPNPASFTLNGASCT) is disordered. The segment covering 1070 to 1090 (GSHTGQNPNPASFTLNGASCT) has biased composition (polar residues).

The protein belongs to the glycosyl hydrolase 48 (cellulase L) family.

The catalysed reaction is Hydrolysis of (1-&gt;4)-beta-D-glucosidic linkages in cellulose and cellotetraose, releasing cellobiose from the non-reducing ends of the chains.. Hydrolyzes cellohexaose to a mixture of cellotetraose, cellotriose and cellobiose, with only a trace of glucose. It hydrolyzed cellopentaose to cellotriose and cellobiose, and cellotetraose to cellobiose, but it did not hydrolyze cellotriose. Also has weak endoglucanase activity. Hydrolyzes glucosidic bonds with inversion of anomeric configuration. This chain is Exoglucanase B (cbhB), found in Cellulomonas fimi (strain ATCC 484 / DSM 20113 / JCM 1341 / CCUG 24087 / LMG 16345 / NBRC 15513 / NCIMB 8980 / NCTC 7547 / NRS-133).